Here is a 399-residue protein sequence, read N- to C-terminus: Enoyl-[acyl-carrier-protein] reductase [NADH] (399 aa).

NAD(+) is bound by residues 48-53 (GASTGY), 74-75 (FE), 111-112 (DA), and 139-140 (LA). Tyrosine 225 provides a ligand contact to substrate. Tyrosine 235 acts as the Proton donor in catalysis. Residues lysine 244 and 273 to 275 (VVT) contribute to the NAD(+) site.

This sequence belongs to the TER reductase family. Monomer.

It catalyses the reaction a 2,3-saturated acyl-[ACP] + NAD(+) = a (2E)-enoyl-[ACP] + NADH + H(+). The protein operates within lipid metabolism; fatty acid biosynthesis. Its function is as follows. Involved in the final reduction of the elongation cycle of fatty acid synthesis (FAS II). Catalyzes the reduction of a carbon-carbon double bond in an enoyl moiety that is covalently linked to an acyl carrier protein (ACP). The sequence is that of Enoyl-[acyl-carrier-protein] reductase [NADH] from Serratia proteamaculans (strain 568).